Reading from the N-terminus, the 751-residue chain is MKKSTVLDARPTGPLPRRPQQPSPVEVRNSSQVEKNNARGSWRKLSPLGRQQEEQGGLIHSQSQSLDTSFAPNTNTTLGSTDVNLNSGVRDRPSPRHSIMHRRETRPLLPSNPTDSGVYASEDCGSSSAGFPRFSSMGNIDKSRDNGQLPDGLCTGGSEVTHSSAVHGEAITDELLRRLTRCSDLKSVSSAQFQLDFGTLRCVESISARMPQLNSLKLNNSRITELRVLGTNYANLRRLWISNCLVSSVSGVGACAPVLEELYASFNSISDIDALTEVSSTLQVVDLEGNDIRDTDMLKRTLPQLKKMKHLVLKGNPVASSETIVELSHSSEEKGTRQRKVSYSKLIGHLMPDLQYLDDAEISNTSLQKSARVQKKHHSAHVDPLEICIRDEYLFVQECIRECGFDALGASGADEMHGSCSRSNVSLISSRSHQLKQNRPSYDRNRPSVAVRSLRKNSQSTASSGDSTNQGCDGGKPRPSCQRWGPTQRTSRLFTGRVTSVGAPKARCRQLPPLKETPASPSTEGLGNEPGNDGQRQQESGAMMQLALKPVPPDANSTRGERKQQNTTSPICGLTAAKGNVYAFDVCDDDDDELEKSKESLMHRVRLGNSATSQQATFMGSGTAKSTNSELADSGLSFLLHRLSTCTHPSGADPPDQRNEQQQEQPTTAGATSRCLDDLETPGDGPLESLNGTPEKDWEWRRELMQSVVDIRKMTSEAALKERVQGSKEVDGGGLEKVESEDEEDVSPVVF.

Residues 1–149 (MKKSTVLDAR…IDKSRDNGQL (149 aa)) are disordered. Positions 13 to 22 (GPLPRRPQQP) are enriched in pro residues. Polar residues-rich tracts occupy residues 28-39 (RNSSQVEKNNAR) and 60-87 (HSQSQSLDTSFAPNTNTTLGSTDVNLNS). LRR repeat units lie at residues 210–235 (MPQLNSLKLNNSRITELRVLGTNYAN), 236–256 (LRRLWISNCLVSSVSGVGACA), 258–279 (VLEELYASFNSISDIDALTEVS), 280–304 (STLQVVDLEGNDIRDTDMLKRTLPQ), and 307–328 (KMKHLVLKGNPVASSETIVELS). 3 disordered regions span residues 430–538 (SRSH…QRQQ), 645–698 (TCTH…EKDW), and 717–751 (EAALKERVQGSKEVDGGGLEKVESEDEEDVSPVVF). Polar residues-rich tracts occupy residues 456–471 (KNSQSTASSGDSTNQG) and 662–671 (QQEQPTTAGA). A compositionally biased stretch (basic and acidic residues) spans 717–738 (EAALKERVQGSKEVDGGGLEKV). The segment covering 739–751 (ESEDEEDVSPVVF) has biased composition (acidic residues).

This sequence belongs to the LRRC56 family.

The protein localises to the cell projection. Its subcellular location is the cilium. The protein resides in the flagellum. Its function is as follows. Required for the assembly of dynein arms in the distal portion of flagellum axoneme. The sequence is that of Leucine-rich repeat-containing protein 56 homolog from Trypanosoma brucei brucei (strain 927/4 GUTat10.1).